The primary structure comprises 878 residues: Leucine--tRNA ligase (878 aa).

Positions 43–53 match the 'HIGH' region motif; sequence PYPSGRIHIGH. The 'KMSKS' region motif lies at 630–634; that stretch reads KMSKS. Lys-633 serves as a coordination point for ATP.

The protein belongs to the class-I aminoacyl-tRNA synthetase family.

The protein localises to the cytoplasm. It carries out the reaction tRNA(Leu) + L-leucine + ATP = L-leucyl-tRNA(Leu) + AMP + diphosphate. The chain is Leucine--tRNA ligase from Nitrobacter hamburgensis (strain DSM 10229 / NCIMB 13809 / X14).